Consider the following 160-residue polypeptide: MEINVIVKPPFKKLVSAQFLKKIASETLKAQAADPSSELGIVITGQEEIKELNCKYRQLDEPTDVLSFYMLEENPENLTAPDDFPTPPDEATHLGEVIISYPQAELQAGAAGHSVNHELAFLLIHGVLHLLGYDHHETAAEAVMKSHQDIAMKHIREILE.

Residues H125, H129, and H135 each contribute to the Zn(2+) site.

This sequence belongs to the endoribonuclease YbeY family. It depends on Zn(2+) as a cofactor.

It is found in the cytoplasm. In terms of biological role, single strand-specific metallo-endoribonuclease involved in late-stage 70S ribosome quality control and in maturation of the 3' terminus of the 16S rRNA. The protein is Endoribonuclease YbeY of Dehalococcoides mccartyi (strain ATCC BAA-2100 / JCM 16839 / KCTC 5957 / BAV1).